Here is a 425-residue protein sequence, read N- to C-terminus: Enolase (425 aa).

Q163 serves as a coordination point for (2R)-2-phosphoglycerate. The Proton donor role is filled by E205. The Mg(2+) site is built by D242, E285, and D312. (2R)-2-phosphoglycerate contacts are provided by K337, R366, S367, and K388. K337 serves as the catalytic Proton acceptor.

This sequence belongs to the enolase family. Mg(2+) serves as cofactor.

The protein resides in the cytoplasm. Its subcellular location is the secreted. It is found in the cell surface. The catalysed reaction is (2R)-2-phosphoglycerate = phosphoenolpyruvate + H2O. It functions in the pathway carbohydrate degradation; glycolysis; pyruvate from D-glyceraldehyde 3-phosphate: step 4/5. Catalyzes the reversible conversion of 2-phosphoglycerate (2-PG) into phosphoenolpyruvate (PEP). It is essential for the degradation of carbohydrates via glycolysis. The chain is Enolase from Cereibacter sphaeroides (strain ATCC 17025 / ATH 2.4.3) (Rhodobacter sphaeroides).